The chain runs to 324 residues: Putative HTH-type transcriptional regulatory protein UNCMA_15260 (324 aa).

One can recognise an HTH cro/C1-type domain in the interval 132–189 (LRSLREAKNISLGELAMALGVSRRTISKYESGMNATIEAALKLEEILDAPIACPVNMI). A DNA-binding region (H-T-H motif) is located at residues 143-162 (LGELAMALGVSRRTISKYES).

The polypeptide is Putative HTH-type transcriptional regulatory protein UNCMA_15260 (Methanocella arvoryzae (strain DSM 22066 / NBRC 105507 / MRE50)).